A 302-amino-acid polypeptide reads, in one-letter code: N-acetylmuramic acid 6-phosphate etherase (302 aa).

In terms of domain architecture, SIS spans 58-221; the sequence is IFERFKKGGR…TTTLMIKLGK (164 aa). The active-site Proton donor is Glu86. Glu117 is an active-site residue.

The protein belongs to the GCKR-like family. MurNAc-6-P etherase subfamily. As to quaternary structure, homodimer.

The catalysed reaction is N-acetyl-D-muramate 6-phosphate + H2O = N-acetyl-D-glucosamine 6-phosphate + (R)-lactate. The protein operates within amino-sugar metabolism; N-acetylmuramate degradation. Its function is as follows. Specifically catalyzes the cleavage of the D-lactyl ether substituent of MurNAc 6-phosphate, producing GlcNAc 6-phosphate and D-lactate. The chain is N-acetylmuramic acid 6-phosphate etherase from Mycoplasma mycoides subsp. mycoides SC (strain CCUG 32753 / NCTC 10114 / PG1).